Consider the following 109-residue polypeptide: Iron-sulfur cluster assembly protein CyaY (109 aa).

It belongs to the frataxin family.

In terms of biological role, involved in iron-sulfur (Fe-S) cluster assembly. May act as a regulator of Fe-S biogenesis. This Burkholderia lata (strain ATCC 17760 / DSM 23089 / LMG 22485 / NCIMB 9086 / R18194 / 383) protein is Iron-sulfur cluster assembly protein CyaY.